The primary structure comprises 160 residues: 2-C-methyl-D-erythritol 2,4-cyclodiphosphate synthase (160 aa).

Residues Asp8 and His10 each contribute to the a divalent metal cation site. Residues 8-10 and 34-35 contribute to the 4-CDP-2-C-methyl-D-erythritol 2-phosphate site; these read DVH and HS. Residue His42 coordinates a divalent metal cation. Residues 56–58, 61–65, 100–106, 132–135, Phe139, and Arg142 contribute to the 4-CDP-2-C-methyl-D-erythritol 2-phosphate site; these read DIG, FPDTD, AQAPKML, and TTTE.

Belongs to the IspF family. Homotrimer. A divalent metal cation serves as cofactor.

The enzyme catalyses 4-CDP-2-C-methyl-D-erythritol 2-phosphate = 2-C-methyl-D-erythritol 2,4-cyclic diphosphate + CMP. It functions in the pathway isoprenoid biosynthesis; isopentenyl diphosphate biosynthesis via DXP pathway; isopentenyl diphosphate from 1-deoxy-D-xylulose 5-phosphate: step 4/6. Functionally, involved in the biosynthesis of isopentenyl diphosphate (IPP) and dimethylallyl diphosphate (DMAPP), two major building blocks of isoprenoid compounds. Catalyzes the conversion of 4-diphosphocytidyl-2-C-methyl-D-erythritol 2-phosphate (CDP-ME2P) to 2-C-methyl-D-erythritol 2,4-cyclodiphosphate (ME-CPP) with a corresponding release of cytidine 5-monophosphate (CMP). This is 2-C-methyl-D-erythritol 2,4-cyclodiphosphate synthase from Proteus mirabilis (strain HI4320).